We begin with the raw amino-acid sequence, 324 residues long: Putative S-adenosyl-L-methionine-dependent methyltransferase MMAR_1059 (324 aa).

Residues Asp-138 and 167–168 (DL) each bind S-adenosyl-L-methionine.

This sequence belongs to the UPF0677 family.

Exhibits S-adenosyl-L-methionine-dependent methyltransferase activity. The protein is Putative S-adenosyl-L-methionine-dependent methyltransferase MMAR_1059 of Mycobacterium marinum (strain ATCC BAA-535 / M).